Consider the following 360-residue polypeptide: sn-glycerol-3-phosphate import ATP-binding protein UgpC (360 aa).

The 232-residue stretch at 4-235 folds into the ABC transporter domain; the sequence is LSLKGVRKSY…PATTFVASFI (232 aa). An ATP-binding site is contributed by 37 to 44; that stretch reads GPSGCGKS.

The protein belongs to the ABC transporter superfamily. sn-glycerol-3-phosphate importer (TC 3.A.1.1.3) family. As to quaternary structure, the complex is composed of two ATP-binding proteins (UgpC), two transmembrane proteins (UgpA and UgpE) and a solute-binding protein (UgpB).

It localises to the cell inner membrane. The enzyme catalyses sn-glycerol 3-phosphate(out) + ATP + H2O = sn-glycerol 3-phosphate(in) + ADP + phosphate + H(+). Part of the ABC transporter complex UgpBAEC involved in sn-glycerol-3-phosphate (G3P) import. Responsible for energy coupling to the transport system. This Burkholderia pseudomallei (strain 1710b) protein is sn-glycerol-3-phosphate import ATP-binding protein UgpC.